Consider the following 1058-residue polypeptide: MAKRTDIKKIMVIGSGPIVIGQAAEFDYAGTQACLALKEEGYQVVLVNSNPATIMTDKEVADKVYIEPLTLAFVSRILRKERPDALLPTLGGQTGLNLAMELSKAGILQELGVELLGTPLSAIDQAEDRDLFKQLMKELGEPIPESEIVTTVEGAISFANAIGYPVIVRPAFTLGGTGGGICTNEEALRDIVENGLKLSPVTQCLIERSIAGFKEIEYEVMRDAADNALVVCSMENFDPVGIHTGDSIVFAPTQTLSDVENQLLRDASLRIIRALKIEGGCNVQLALDPNSFSYYVIEVNPRVSRSSALASKATGYPIAKIAAKIAVGLRLDDMLNPVTGTTYAMFEPALDYVVAKLPRFPFDKFEQGERRLGTQMKATGEVMAIGRRIEECLLKACRSLEIGVDHNELKGLDTVSDHELVAHIVRAQDDRLFYLSEALRRGYSIEELAGLTKIDLFFLDKLRHIVELEQELVKKPVDIDLLTEAKRYGFSDQKIAELWQTDAASIRRLRRAYRVLPVYKMVDTCAAEFDSQTPYFYSTYEWENESIKSEKESVIVLGSGPIRIGQGVEFDYATVHSVKAIQAAGYEAIIMNSNPETVSTDFSISDKLYFEPLTFEEVMNVIELEQPKGVILQFGGQTAINLAEQLTKAGVPILGTQLEDLDRAEDRKLFEKALKDLGIPQPPGKTATNEAEALEAARAIGFPVLVRPSYVLGGRAMEIVENEDDLRSYMKTAVKASPEHPVLIDSYILGKECEVDAISDGQSVLIPGIMEHIERAGVHSGDSMAVYPPQHLSKQVQDKIVDYTKRLAIGLNCIGMMNIQFVIQNEQVYVIEVNPRASRTVPFLSKVTNIPMAQVATKLILDQTLKDLGYQDGLYPESSLVHIKAPVFSFAKLAKVDSLLGPEMKSTGEVMGSDLTLEKALYKAFEASYLHMPEYGTIVFTIADDHKPEALALARRFSAIGYQVMATEGTAAFFADQGLDSQLVGKIGGNAHDIPALLRKGQIQAIINTVGAKRVADQDGQVIRSSAIEQGVPLFTALDTAAAMLRVLESRTFSIEAI.

A carboxyphosphate synthetic domain region spans residues 1 to 401 (MAKRTDIKKI…CLLKACRSLE (401 aa)). Positions 129, 169, 175, 176, 208, 210, 215, 241, 242, 243, 284, and 298 each coordinate ATP. The ATP-grasp 1 domain occupies 133-327 (KQLMKELGEP…IAKIAAKIAV (195 aa)). Mg(2+) contacts are provided by Gln284, Glu298, and Asn300. The Mn(2+) site is built by Gln284, Glu298, and Asn300. The segment at 402–546 (IGVDHNELKG…YSTYEWENES (145 aa)) is oligomerization domain. A carbamoyl phosphate synthetic domain region spans residues 547 to 929 (IKSEKESVIV…ALYKAFEASY (383 aa)). The region spanning 671-861 (EKALKDLGIP…MAQVATKLIL (191 aa)) is the ATP-grasp 2 domain. ATP is bound by residues Arg707, Ser746, Ile748, Glu752, Gly777, Val778, His779, Ser780, Gln820, and Glu832. Residues Gln820, Glu832, and Asn834 each contribute to the Mg(2+) site. 3 residues coordinate Mn(2+): Gln820, Glu832, and Asn834. The 129-residue stretch at 930–1058 (LHMPEYGTIV…ESRTFSIEAI (129 aa)) folds into the MGS-like domain. Residues 930 to 1058 (LHMPEYGTIV…ESRTFSIEAI (129 aa)) form an allosteric domain region.

The protein belongs to the CarB family. In terms of assembly, composed of two chains; the small (or glutamine) chain promotes the hydrolysis of glutamine to ammonia, which is used by the large (or ammonia) chain to synthesize carbamoyl phosphate. Tetramer of heterodimers (alpha,beta)4. It depends on Mg(2+) as a cofactor. Requires Mn(2+) as cofactor.

It carries out the reaction hydrogencarbonate + L-glutamine + 2 ATP + H2O = carbamoyl phosphate + L-glutamate + 2 ADP + phosphate + 2 H(+). It catalyses the reaction hydrogencarbonate + NH4(+) + 2 ATP = carbamoyl phosphate + 2 ADP + phosphate + 2 H(+). The protein operates within amino-acid biosynthesis; L-arginine biosynthesis; carbamoyl phosphate from bicarbonate: step 1/1. It participates in pyrimidine metabolism; UMP biosynthesis via de novo pathway; (S)-dihydroorotate from bicarbonate: step 1/3. Large subunit of the glutamine-dependent carbamoyl phosphate synthetase (CPSase). CPSase catalyzes the formation of carbamoyl phosphate from the ammonia moiety of glutamine, carbonate, and phosphate donated by ATP, constituting the first step of 2 biosynthetic pathways, one leading to arginine and/or urea and the other to pyrimidine nucleotides. The large subunit (synthetase) binds the substrates ammonia (free or transferred from glutamine from the small subunit), hydrogencarbonate and ATP and carries out an ATP-coupled ligase reaction, activating hydrogencarbonate by forming carboxy phosphate which reacts with ammonia to form carbamoyl phosphate. The chain is Carbamoyl phosphate synthase large chain from Streptococcus equi subsp. zooepidemicus (strain H70).